A 341-amino-acid chain; its full sequence is Putative [LysW]-lysine/[LysW]-ornithine hydrolase (341 aa).

A Zn(2+)-binding site is contributed by His62. The active site involves Asp64. Asp86 is a Zn(2+) binding site. Glu115 functions as the Proton acceptor in the catalytic mechanism. Residues Glu116, Glu140, and His309 each coordinate Zn(2+).

Belongs to the peptidase M20A family. LysK subfamily. Requires Zn(2+) as cofactor. The cofactor is Co(2+).

The protein localises to the cytoplasm. It carries out the reaction [amino-group carrier protein]-C-terminal-gamma-(L-lysyl)-L-glutamate + H2O = [amino-group carrier protein]-C-terminal-L-glutamate + L-lysine. The catalysed reaction is [amino-group carrier protein]-C-terminal-gamma-(L-ornithyl)-L-glutamate + H2O = [amino-group carrier protein]-C-terminal-L-glutamate + L-ornithine. The protein operates within amino-acid biosynthesis; L-lysine biosynthesis via AAA pathway; L-lysine from L-alpha-aminoadipate (Thermus route): step 5/5. It participates in amino-acid biosynthesis; L-arginine biosynthesis. In terms of biological role, catalyzes the release of L-lysine from [LysW]-gamma-L-lysine and the release of L-ornithine from [LysW]-L-ornithine. The protein is Putative [LysW]-lysine/[LysW]-ornithine hydrolase of Pyrobaculum aerophilum (strain ATCC 51768 / DSM 7523 / JCM 9630 / CIP 104966 / NBRC 100827 / IM2).